Here is a 403-residue protein sequence, read N- to C-terminus: Casein kinase II subunit alpha-2 (403 aa).

Positions 1 to 31 are cleaved as a signal peptide; sequence MHLIFFFSYFLRRYLLLLCAILILRAPLAHS. In terms of domain architecture, Protein kinase spans 104 to 389; that stretch reads YEVVRKVGRG…AKEAMAHPYF (286 aa). ATP is bound by residues 110 to 118 and lysine 133; that span reads VGRGKYSEV. An N-linked (GlcNAc...) asparagine glycan is attached at asparagine 182. Aspartate 221 serves as the catalytic Proton acceptor.

It belongs to the protein kinase superfamily. Ser/Thr protein kinase family. CK2 subfamily. As to quaternary structure, heterotetramer of two catalytic alpha subunits and two regulatory beta subunits. In terms of tissue distribution, seems to be present in all plant organs. But seems to be more expressed than CKA1.

It localises to the nucleus. The protein resides in the nucleolus. The enzyme catalyses L-seryl-[protein] + ATP = O-phospho-L-seryl-[protein] + ADP + H(+). The catalysed reaction is L-threonyl-[protein] + ATP = O-phospho-L-threonyl-[protein] + ADP + H(+). Casein kinases are operationally defined by their preferential utilization of acidic proteins such as caseins as substrates. The alpha chain contains the catalytic site. The tetrameric holoenzyme CK2, composed of two alpha and two beta subunits, phosphorylates the transcription factor PIF1 after an exposure to light, resulting in a proteasome-dependent degradation of PIF1 and promotion of photomorphogenesis. CK2 phosphorylates translation initiation factors. May participate in the regulation of the initiation of translation. Acts as circadian clock component that maintains the correct period length through phosphorylation of CCA1. May act as an ectokinase that phosphorylates several extracellular proteins. The polypeptide is Casein kinase II subunit alpha-2 (Arabidopsis thaliana (Mouse-ear cress)).